We begin with the raw amino-acid sequence, 567 residues long: MTDFKEFADVCKQIEHISSSLEMTDVVSDMLKSISTEELPVVTHFVMGDVFPAWSVEQLGVGTSLLYSALSESSGLSLKEIEDLVRSTGDIGETAVAALGKKKKNKKKNQASLSFFSEDAASVSISIMDVFERFLDISRYSGAGSQSSKMRNLQFLFNSSSSEEARYLARLTIEDLRIGVGEGIVRDAISKAFDVPAGDIERGFMLTNDLGLVAVAAKEGGIEEISKLRMELDRPIKMMLAQVTPSIEAAIKDLGMLAVEWKFDGARVQIHKKGDSINIFSRRLENVTLSLPDIVEAVKLHVKADSAILEGEAVAVDENGAPRAFQDILKRFRRKYDVETMVREIPLTLNLFDILYLNGDVLMDQSLLRRREQLVACVENCDSIKVDEQVLTDDVNVVNDIYAAALNGGHEGVMLKNPEASYSPGKRGKNWLKKKPIMETLDLVVIAAEWGYGKRANLIGSYALACFDPEDGKFLPIGKVATGFSDEQLAELTEVFSELIIGESGREIELKPDVVFEIAFEEIQKSTNYGSGYALRFPRLVNVREDKSPEEAETIDRIESIYLSQRG.

E260 contacts ATP. K262 functions as the N6-AMP-lysine intermediate in the catalytic mechanism. The ATP site is built by R267, R282, E312, F352, R427, and K433.

It belongs to the ATP-dependent DNA ligase family. Mg(2+) is required as a cofactor.

The enzyme catalyses ATP + (deoxyribonucleotide)n-3'-hydroxyl + 5'-phospho-(deoxyribonucleotide)m = (deoxyribonucleotide)n+m + AMP + diphosphate.. Functionally, DNA ligase that seals nicks in double-stranded DNA during DNA replication, DNA recombination and DNA repair. The sequence is that of DNA ligase from Methanococcoides burtonii (strain DSM 6242 / NBRC 107633 / OCM 468 / ACE-M).